Consider the following 762-residue polypeptide: Mitochondrial intermediate peptidase (762 aa).

A mitochondrion-targeting transit peptide spans 1–28; that stretch reads MQVRTLLTLGKKKVIGNRQCILSLYRKY. Position 544 (H544) interacts with Zn(2+). E545 is a catalytic residue. Zn(2+)-binding residues include H548 and H551.

The protein belongs to the peptidase M3 family. Requires Zn(2+) as cofactor.

Its subcellular location is the mitochondrion matrix. It catalyses the reaction Release of an N-terminal octapeptide as second stage of processing of some proteins imported into the mitochondrion.. Functionally, cleaves proteins, imported into the mitochondrion, to their mature size. While most mitochondrial precursor proteins are processed to the mature form in one step by mitochondrial processing peptidase (MPP), the sequential cleavage by MIP of an octapeptide after initial processing by MPP is a required step for a subgroup of nuclear-encoded precursor proteins destined for the matrix or the inner membrane. This Schizosaccharomyces pombe (strain 972 / ATCC 24843) (Fission yeast) protein is Mitochondrial intermediate peptidase (oct1).